The following is a 273-amino-acid chain: 4-hydroxy-tetrahydrodipicolinate reductase (273 aa).

NAD(+) contacts are provided by residues 12 to 17 (GAGGRM) and Glu-38. Arg-39 serves as a coordination point for NADP(+). Residues 102-104 (GTT) and 126-129 (AANF) contribute to the NAD(+) site. His-159 acts as the Proton donor/acceptor in catalysis. Residue His-160 coordinates (S)-2,3,4,5-tetrahydrodipicolinate. Catalysis depends on Lys-163, which acts as the Proton donor. 169 to 170 (GT) contributes to the (S)-2,3,4,5-tetrahydrodipicolinate binding site.

This sequence belongs to the DapB family. Homotetramer.

It localises to the cytoplasm. It catalyses the reaction (S)-2,3,4,5-tetrahydrodipicolinate + NAD(+) + H2O = (2S,4S)-4-hydroxy-2,3,4,5-tetrahydrodipicolinate + NADH + H(+). The enzyme catalyses (S)-2,3,4,5-tetrahydrodipicolinate + NADP(+) + H2O = (2S,4S)-4-hydroxy-2,3,4,5-tetrahydrodipicolinate + NADPH + H(+). It participates in amino-acid biosynthesis; L-lysine biosynthesis via DAP pathway; (S)-tetrahydrodipicolinate from L-aspartate: step 4/4. Functionally, catalyzes the conversion of 4-hydroxy-tetrahydrodipicolinate (HTPA) to tetrahydrodipicolinate. The sequence is that of 4-hydroxy-tetrahydrodipicolinate reductase from Klebsiella pneumoniae (strain 342).